The primary structure comprises 466 residues: Glutamate--tRNA ligase (466 aa).

A 'HIGH' region motif is present at residues 10 to 20 (PSPTGYLHIGG). The 'KMSKS' region motif lies at 237-241 (RLSKR). Lysine 240 serves as a coordination point for ATP.

Belongs to the class-I aminoacyl-tRNA synthetase family. Glutamate--tRNA ligase type 1 subfamily. Monomer.

The protein resides in the cytoplasm. It carries out the reaction tRNA(Glu) + L-glutamate + ATP = L-glutamyl-tRNA(Glu) + AMP + diphosphate. Functionally, catalyzes the attachment of glutamate to tRNA(Glu) in a two-step reaction: glutamate is first activated by ATP to form Glu-AMP and then transferred to the acceptor end of tRNA(Glu). The sequence is that of Glutamate--tRNA ligase from Syntrophotalea carbinolica (strain DSM 2380 / NBRC 103641 / GraBd1) (Pelobacter carbinolicus).